We begin with the raw amino-acid sequence, 387 residues long: MEGTQEALSGKMRLLFTPAARTSLLMLRLNEAALRALQECQQQQVRPVIAFQGQRGYLRLPGPGWSCLFSFIVSQCGQEGGGLDLVYQRLGRSGPNCLHCLGSLRERLTIWAAMDTIPAPLLAQEHLTEGTRESESWQDSEDEPEGHPQMALQEVSDPLASNHEQSLPGSSSEPMAQWEVRNHTYLSNREPDQPLPSSASQKRLDKKRSAPITTEEPEEKRPRALPLASSPLQGLSNQDSPEEQDWGQDADGDSRLEQSLSVQSASESPSPEEVPDYLLQYSTIHSAEQQQAYEQDFETDYAEYRILHARVGAASQRFTELGAEIKRLQRGTPEHKVLEDKIVQEYKKFRKRYPSYSEEKRRCEYLHEKLSHIKGLILEFEEKNRGS.

Disordered stretches follow at residues 127–148 (LTEG…EGHP) and 186–275 (LSNR…EEVP). Residues 230–239 (SPLQGLSNQD) show a composition bias toward polar residues. Serine 240 carries the post-translational modification Phosphoserine. Over residues 240–251 (SPEEQDWGQDAD) the composition is skewed to acidic residues. Positions 257–271 (EQSLSVQSASESPSP) are enriched in low complexity. Residues 275 to 385 (PDYLLQYSTI…LILEFEEKNR (111 aa)) form the OCEL domain.

The protein belongs to the ELL/occludin family. As to quaternary structure, interacts with AFF4. Component of the super elongation complex (SEC), at least composed of EAF1, EAF2, CDK9, MLLT3/AF9, AFF (AFF1 or AFF4), the P-TEFb complex and ELL (ELL, ELL2 or ELL3). Component of the little elongation complex (LEC), at least composed of ELL (ELL, ELL2 or ELL3), ZC3H8, ICE1 and ICE2.

It localises to the nucleus. Enhancer-binding elongation factor that specifically binds enhancers in embryonic stem cells (ES cells), marks them, and is required for their future activation during stem cell specification. Elongation factor component of the super elongation complex (SEC), a complex required to increase the catalytic rate of RNA polymerase II transcription by suppressing transient pausing by the polymerase at multiple sites along the DNA. Component of the little elongation complex (LEC), a complex required to regulate small nuclear RNA (snRNA) gene transcription by RNA polymerase II and III. Does not only bind to enhancer regions of active genes, but also marks the enhancers that are in a poised or inactive state in ES cells and is required for establishing proper RNA polymerase II occupancy at developmentally regulated genes in a cohesin-dependent manner. Probably required for priming developmentally regulated genes for later recruitment of the super elongation complex (SEC), for transcriptional activation during differentiation. Required for recruitment of P-TEFb within SEC during differentiation. Probably preloaded on germ cell chromatin, suggesting that it may prime gene activation by marking enhancers as early as in the germ cells. Promoting epithelial-mesenchymal transition (EMT). The polypeptide is RNA polymerase II elongation factor ELL3 (Ell3) (Rattus norvegicus (Rat)).